Reading from the N-terminus, the 378-residue chain is Monomethylxanthine methyltransferase 1 (378 aa).

Positions 18, 61, 66, 100, 101, 139, 140, and 156 each coordinate S-adenosyl-L-homocysteine. Residues Tyr157, His160, and Trp161 each coordinate theobromine. The Mg(2+) site is built by Asn178, Asp260, Phe262, and Asn263. Position 362 (Tyr362) interacts with theobromine.

It belongs to the methyltransferase superfamily. Type-7 methyltransferase family. Mg(2+) is required as a cofactor. In terms of tissue distribution, expressed, at low levels, in stems, young leaves, floral buds and immature fruits (grains), but not in roots, old leaves and mature fruits.

It is found in the cytoplasm. The enzyme catalyses 7-methylxanthine + S-adenosyl-L-methionine = theobromine + S-adenosyl-L-homocysteine + H(+). It participates in alkaloid biosynthesis. Its function is as follows. Involved in the biosynthesis of caffeine. Catalyzes the conversion of 7-methylxanthine (7mX) to theobromine and of paraxanthine to caffeine. Has a 5-fold preference for 7mX. The protein is Monomethylxanthine methyltransferase 1 of Coffea arabica (Arabian coffee).